Reading from the N-terminus, the 334-residue chain is Glycerol-3-phosphate dehydrogenase [NAD(P)+] (334 aa).

Residues S14, Y15, H35, and K109 each coordinate NADPH. Sn-glycerol 3-phosphate contacts are provided by K109, G138, and T140. A142 contacts NADPH. The sn-glycerol 3-phosphate site is built by K194, D247, S257, R258, and N259. The active-site Proton acceptor is K194. R258 contacts NADPH. Residues V282 and E284 each contribute to the NADPH site.

This sequence belongs to the NAD-dependent glycerol-3-phosphate dehydrogenase family.

Its subcellular location is the cytoplasm. The enzyme catalyses sn-glycerol 3-phosphate + NAD(+) = dihydroxyacetone phosphate + NADH + H(+). It carries out the reaction sn-glycerol 3-phosphate + NADP(+) = dihydroxyacetone phosphate + NADPH + H(+). It participates in membrane lipid metabolism; glycerophospholipid metabolism. Catalyzes the reduction of the glycolytic intermediate dihydroxyacetone phosphate (DHAP) to sn-glycerol 3-phosphate (G3P), the key precursor for phospholipid synthesis. This chain is Glycerol-3-phosphate dehydrogenase [NAD(P)+], found in Psychromonas ingrahamii (strain DSM 17664 / CCUG 51855 / 37).